Consider the following 95-residue polypeptide: RING finger protein Z (95 aa).

Glycine 2 carries N-myristoyl glycine; by host lipidation. The RING-type; atypical zinc finger occupies 38-74 (CKSCWFANKGLLKCSNHYLCLKCLTLMLRRSDYCGIC). Positions 88–91 (PSAP) match the PTAP/PSAP motif motif.

This sequence belongs to the arenaviridae Z protein family. As to quaternary structure, interacts with protein NP; this interaction probably directs the encapsidated genome to budding sites. Interacts (via RING domain) with polymerase L; this interaction inhibits viral transcription and replication, Z partially blocks the product exit tunnel for the releasing nascent RNA product. Interacts with the glycoprotein complex; this interaction plays a role in virion budding. Interacts with host eIF4E; this interaction results in eIF4E reduced affinity for its substrate, the 5'-m7 G cap structure. Interacts (via late-budding domain) with host TSG101; this interaction is essential for budding and release of viral particles. Interacts with host RPLP0; this interaction may serve to load ribosome-like particles inside the virion. Interacts with host PML; this interaction induces PML bodies redistribution in the cytoplasm upon viral infection. Myristoylation is required for the role of RING finger protein Z in assembly and budding.

The protein localises to the virion. Its subcellular location is the host cytoplasm. It localises to the host perinuclear region. The protein resides in the host cell membrane. In terms of biological role, plays a crucial role in virion assembly and budding. Expressed late in the virus life cycle, it acts as an inhibitor of viral transcription and RNA synthesis by interacting with the viral polymerase L. Presumably recruits the NP encapsidated genome to cellular membranes at budding sites via direct interaction with NP. Plays critical roles in the final steps of viral release by interacting with host TSG101, a member of the vacuolar protein-sorting pathway and using other cellular host proteins involved in vesicle formation pathway. The budding of the virus progeny occurs after association of protein Z with the viral glycoprotein complex SSP-GP1-GP2 at the cell periphery, step that requires myristoylation of protein Z. Also selectively represses protein production by associating with host eIF4E. In cell-based minigenome assay, has an inhibitory effect on the ribonucleoprotein machinery (vRNP), which is responsible for the replication and transcription of the viral genome. This chain is RING finger protein Z, found in Neotoma (wood rats).